Consider the following 326-residue polypeptide: Protein farnesyltransferase/geranylgeranyltransferase type-1 subunit alpha (326 aa).

5 PFTA repeats span residues 55–89, 90–124, 126–160, 161–194, and 201–235; these read RSPR…ALNH, DLFE…KLGP, VAGR…ALGG, WEDE…QSPL, and MRES…DDKE.

This sequence belongs to the protein prenyltransferase subunit alpha family. In terms of assembly, heterodimer of an alpha and a beta subunit. It depends on Mg(2+) as a cofactor.

It catalyses the reaction L-cysteinyl-[protein] + (2E,6E)-farnesyl diphosphate = S-(2E,6E)-farnesyl-L-cysteinyl-[protein] + diphosphate. The enzyme catalyses geranylgeranyl diphosphate + L-cysteinyl-[protein] = S-geranylgeranyl-L-cysteinyl-[protein] + diphosphate. Essential subunit of both the farnesyltransferase and the geranylgeranyltransferase complex. Contributes to the transfer of a farnesyl or geranylgeranyl moiety from farnesyl or geranylgeranyl diphosphate to a cysteine at the fourth position from the C-terminus of several proteins having the C-terminal sequence Cys-aliphatic-aliphatic-X. In Arabidopsis thaliana (Mouse-ear cress), this protein is Protein farnesyltransferase/geranylgeranyltransferase type-1 subunit alpha (FTA).